We begin with the raw amino-acid sequence, 469 residues long: MVNEEMESSLKVIDVARVTPSNSDSSESLTLPLTFFDLLWYKLHAVERVIFYKLTDASRPFFDSVIVPNLKTSLSSSLSHYLPLAGKLVWEPLDPKPKIVYTPNDAVSFTVAESNADFSRLTGKEPFPTTELYPLVPELHVSDDSASAVSFQVTLFPNQGFCISVNAHHAVLDGKTTTNFLKSWARTCKNQDSFLPQDLIPVYDRTVIKDPMDLDTKILNAWHRVAKVFTGGKEPENPKSLKLLWSPEIGPDVFRYTLNLTREDIQKLRERLKKESSSSSVSSSPKELRLSTFVIVYSYALTCLIKARGGDPSRPVGYGFAVDCRSLMVPPVPSSYFGNCVSACFKMSLTAETFMSEEGFLAAARMVSDSVEALDENVALKIPEILEGFTTLSPGTQVLSVAGSTRFGVYGLDFGWGRPEKVVVVSIDQGEAISFAESRDGSGGVELGFSLKKHEMDVLVDLLHKGLEN.

At M1 the chain carries N-acetylmethionine. Residue H169 is the Proton acceptor of the active site. Positions 169 to 173 match the HXXXD motif motif; it reads HAVLD. 291–292 is a binding site for malonyl-CoA; sequence ST. Catalysis depends on D413, which acts as the Proton acceptor. Residues 413–417 carry the DFGWG motif motif; it reads DFGWG.

It belongs to the plant acyltransferase family. Phenolic glucoside malonyltransferase subfamily.

It catalyses the reaction a flavonol 3-O-beta-D-glucoside + malonyl-CoA = a flavonol 3-O-(6-O-malonyl-beta-D-glucoside) + CoA. The enzyme catalyses a flavonol 7-O-beta-D-glucoside + malonyl-CoA = a flavonol 7-O-(6-O-malonyl-beta-D-glucoside) + CoA. Its function is as follows. Malonyltransferase acting on xenobiotic glucosides. Has activity toward 2-Naphthol glucoside (2NAG), 1-Naphthol glucoside (1NAG), kaempferol 7-O-glucoside, kaempferol 3-O-glucoside, hydroxycoumarin glucosides, phenol-glucosides and isoflavone glucoside (daidzin), but not toward 4-coumaroyl glucoside, kaempferol 3,7-O-diglucoside, salicylic acid glucoside and phlorizin. In vivo, seems to be involved in the malonylation of 2-Naphthol glucoside while PMAT2 would be involved in the malonylation of 4-methylumbelliferone glucoside or 4-nitrophenyl glucoside. The polypeptide is Phenolic glucoside malonyltransferase 1 (PMAT1) (Arabidopsis thaliana (Mouse-ear cress)).